A 477-amino-acid chain; its full sequence is Zinc metalloproteinase/disintegrin (477 aa).

Residues 1–20 form the signal peptide; sequence MIEVLLVTICLAAFPYQGSS. Residues 21–187 constitute a propeptide that is removed on maturation; that stretch reads IILESGNVND…PIKKASQSNL (167 aa). A Peptidase M12B domain is found at 193 to 389; the sequence is RYIELFLVVD…DNPQCILNKQ (197 aa). Ca(2+)-binding residues include Glu-196 and Asp-280. Cystine bridges form between Cys-304-Cys-384, Cys-344-Cys-368, and Cys-346-Cys-351. His-329 contacts Zn(2+). Glu-330 is a catalytic residue. Residues His-333 and His-339 each coordinate Zn(2+). The Ca(2+) site is built by Cys-384 and Asn-387. Positions 390-404 are excised as a propeptide; the sequence is LRTDTVSTPVSGKNF. Residues 396-477 form the Disintegrin domain; sequence STPVSGKNFG…AGCPRNPFHA (82 aa). 6 cysteine pairs are disulfide-bonded: Cys-410–Cys-425, Cys-412–Cys-420, Cys-419–Cys-442, Cys-433–Cys-439, Cys-438–Cys-463, and Cys-451–Cys-470. The Cell attachment site signature appears at 455-457; that stretch reads RGD.

Belongs to the venom metalloproteinase (M12B) family. P-II subfamily. P-IIa sub-subfamily. As to quaternary structure, monomer. The cofactor is Zn(2+). As to expression, expressed by the venom gland.

The protein resides in the secreted. Its activity is regulated as follows. Inhibited by 1,10-phenanthroline and EDTA. In terms of biological role, impairs hemostasis in the envenomed animal. Does not exhibit detectable plasminogen activating activity. Has hemagglutinating activity on red blood cells. Cleaves insulin B chain at '38-Ala-|-Leu-39' and '40-Tyr-|-Leu-41' bonds. This recombinant protein shows high inhibitory activity on collagen-induced platelet aggregation. The chain is Zinc metalloproteinase/disintegrin from Bothrops jararaca (Jararaca).